The chain runs to 1043 residues: Isoleucine--tRNA ligase (1043 aa).

The short motif at 48–58 is the 'HIGH' region element; that stretch reads PFATGLPHYGH. Residues 591 to 595 carry the 'KMSKS' region motif; sequence KMSKR. Residue K594 coordinates ATP.

It belongs to the class-I aminoacyl-tRNA synthetase family. IleS type 2 subfamily. In terms of assembly, monomer. It depends on Zn(2+) as a cofactor.

The protein localises to the cytoplasm. It catalyses the reaction tRNA(Ile) + L-isoleucine + ATP = L-isoleucyl-tRNA(Ile) + AMP + diphosphate. Catalyzes the attachment of isoleucine to tRNA(Ile). As IleRS can inadvertently accommodate and process structurally similar amino acids such as valine, to avoid such errors it has two additional distinct tRNA(Ile)-dependent editing activities. One activity is designated as 'pretransfer' editing and involves the hydrolysis of activated Val-AMP. The other activity is designated 'posttransfer' editing and involves deacylation of mischarged Val-tRNA(Ile). This chain is Isoleucine--tRNA ligase, found in Chlamydia pneumoniae (Chlamydophila pneumoniae).